We begin with the raw amino-acid sequence, 103 residues long: Pyrimidine/purine nucleoside phosphorylase (103 aa).

The protein belongs to the nucleoside phosphorylase PpnP family.

The enzyme catalyses a purine D-ribonucleoside + phosphate = a purine nucleobase + alpha-D-ribose 1-phosphate. The catalysed reaction is adenosine + phosphate = alpha-D-ribose 1-phosphate + adenine. It carries out the reaction cytidine + phosphate = cytosine + alpha-D-ribose 1-phosphate. It catalyses the reaction guanosine + phosphate = alpha-D-ribose 1-phosphate + guanine. The enzyme catalyses inosine + phosphate = alpha-D-ribose 1-phosphate + hypoxanthine. The catalysed reaction is thymidine + phosphate = 2-deoxy-alpha-D-ribose 1-phosphate + thymine. It carries out the reaction uridine + phosphate = alpha-D-ribose 1-phosphate + uracil. It catalyses the reaction xanthosine + phosphate = alpha-D-ribose 1-phosphate + xanthine. In terms of biological role, catalyzes the phosphorolysis of diverse nucleosides, yielding D-ribose 1-phosphate and the respective free bases. Can use uridine, adenosine, guanosine, cytidine, thymidine, inosine and xanthosine as substrates. Also catalyzes the reverse reactions. In Shewanella baltica (strain OS195), this protein is Pyrimidine/purine nucleoside phosphorylase.